Reading from the N-terminus, the 54-residue chain is Ovomucoid (54 aa).

Residues 4 to 54 (VDCSDYPRPDCTLEYMPLCGSDNKTYGNKCNFCNAVVDSNGTLTLSHFGKC) form the Kazal-like domain. Cystine bridges form between cysteine 6–cysteine 36, cysteine 14–cysteine 33, and cysteine 22–cysteine 54. Asparagine 43 carries N-linked (GlcNAc...) asparagine glycosylation.

The protein resides in the secreted. The protein is Ovomucoid of Dendrocygna eytoni (Plumed whistling-duck).